The chain runs to 536 residues: Transcriptional regulator RPN4 (536 aa).

Low complexity-rich tracts occupy residues 154–181 (QEQQ…QQQQ) and 361–370 (SPSAISPASP). 3 disordered regions span residues 154–196 (QEQQ…TRRR), 353–375 (VFDQ…SDDM), and 393–434 (EEIN…AEIT). The span at 393-411 (EEINKKHSKSGKKESKSQK) shows a compositional bias: basic and acidic residues. The C2H2-type zinc finger occupies 440–471 (HQCNLINPSTGEPCNKQFSRPYDLIRHQDTIH).

It is found in the nucleus. Transcriptional activator of a number of genes encoding proteasomal subunits. Binds to the DNA sequence 5'-GAAGGCAAAA-3', enriched in regions upstream of proteasome genes. In Candida albicans (strain SC5314 / ATCC MYA-2876) (Yeast), this protein is Transcriptional regulator RPN4 (RPN4).